Reading from the N-terminus, the 101-residue chain is Small ribosomal subunit protein uS14 (101 aa).

It belongs to the universal ribosomal protein uS14 family. As to quaternary structure, part of the 30S ribosomal subunit. Contacts proteins S3 and S10.

Functionally, binds 16S rRNA, required for the assembly of 30S particles and may also be responsible for determining the conformation of the 16S rRNA at the A site. This chain is Small ribosomal subunit protein uS14, found in Polaromonas naphthalenivorans (strain CJ2).